The primary structure comprises 608 residues: Sensor protein kinase WalK (608 aa).

Transmembrane regions (helical) follow at residues 14-34 (LVIV…LYFT) and 182-202 (IFII…FFIA). The region spanning 203–255 (RTITRPITDMRNQTVEMSKGNYTQRVKIYGNDEIGELALAFNNLSKRVQEAQA) is the HAMP domain. Residues 260-330 (EKRRLDSVIT…EIQENNDSFL (71 aa)) form the PAS domain. The region spanning 324 to 377 (ENNDSFLLDINEDEGIIARVNFSTIVQETGFVTGYIAVLHDVTEQQQVERERRE) is the PAC domain. Positions 381–599 (NVSHELRTPL…SIFITLPCEV (219 aa)) constitute a Histidine kinase domain. H384 bears the Phosphohistidine; by autocatalysis mark.

Autophosphorylated.

It localises to the cell membrane. The enzyme catalyses ATP + protein L-histidine = ADP + protein N-phospho-L-histidine.. Member of the two-component regulatory system WalK/WalR. WalK functions as a sensor protein kinase which is autophosphorylated at a histidine residue and transfers its phosphate group to WalR. This is Sensor protein kinase WalK (walK) from Staphylococcus haemolyticus (strain JCSC1435).